A 226-amino-acid polypeptide reads, in one-letter code: Cytidylate kinase (226 aa).

An ATP-binding site is contributed by Gly-12–Thr-20.

Belongs to the cytidylate kinase family. Type 1 subfamily.

The protein resides in the cytoplasm. The catalysed reaction is CMP + ATP = CDP + ADP. It carries out the reaction dCMP + ATP = dCDP + ADP. In Colwellia psychrerythraea (strain 34H / ATCC BAA-681) (Vibrio psychroerythus), this protein is Cytidylate kinase.